The following is a 340-amino-acid chain: Chitinase 7 (340 aa).

A signal peptide spans M1 to A32. Positions E33–V73 constitute a Chitin-binding type-1 domain. 7 disulfides stabilise this stretch: C35/C50, C44/C56, C49/C63, C67/C71, C118/C173, C185/C193, and C293/C323.

This sequence belongs to the glycosyl hydrolase 19 family. Chitinase class I subfamily. As to expression, expressed in pistils, stamens and lodicules.

It carries out the reaction Random endo-hydrolysis of N-acetyl-beta-D-glucosaminide (1-&gt;4)-beta-linkages in chitin and chitodextrins.. In terms of biological role, hydrolyzes chitin and may play a role in defense against fungal pathogens containing chitin. This chain is Chitinase 7 (Cht7), found in Oryza sativa subsp. indica (Rice).